The primary structure comprises 344 residues: MIPVFDPVALGLYMLGYLFMFVIAATVAPRVAGAVSGRLTLYGAMALTGVMIVLTTAFVIYLFVLVAAPTLATVSFLVGLIAFVVLMNLLTYVASPYIINASYGARPDPRLQQIVDEVAARLGAPFKLKAVVVDGPPNAFAYGNFLTGRYVAVTSGMLSLVDRRELEAVIGHEIGHHLHRDNAIMLLFGVLPSVVYYLGVTAVHMGLGSGNSRGGNAALLAVGVVAVLASFLIQLLVLAFSRLREYYADTAGAKAAGKEAMQFALAKIHKFYFMAPEARQAVSESKFRALFIYALVNAVANPFVTITRAEVEQIKRANYSALQEVFSTHPPIPKRLRFLDQLPL.

3 helical membrane-spanning segments follow: residues 8 to 28 (VALG…ATVA), 46 to 66 (ALTG…FVLV), and 74 to 94 (VSFL…TYVA). A Zn(2+)-binding site is contributed by His172. Glu173 is a catalytic residue. A Zn(2+)-binding site is contributed by His176. 2 helical membrane-spanning segments follow: residues 183–203 (AIML…VTAV) and 220–240 (LAVG…VLAF). Residue Glu245 participates in Zn(2+) binding.

This sequence belongs to the peptidase M48B family. Zn(2+) is required as a cofactor.

The protein resides in the cell membrane. This is Protease HtpX homolog from Pyrobaculum calidifontis (strain DSM 21063 / JCM 11548 / VA1).